We begin with the raw amino-acid sequence, 396 residues long: Multidrug resistance protein MdtL (396 aa).

Residues Met-1 to Tyr-4 are Cytoplasmic-facing. Residues Leu-5–Gly-25 form a helical membrane-spanning segment. Residues Leu-26–His-41 lie on the Periplasmic side of the membrane. Residues Ile-42–Ala-62 form a helical membrane-spanning segment. At Asp-63–Arg-64 the chain is on the cytoplasmic side. Residues Ile-65–Ala-85 form a helical membrane-spanning segment. Over Ala-86–Asp-92 the chain is Periplasmic. The helical transmembrane segment at Leu-93 to Phe-113 threads the bilayer. Over Ala-114–Met-131 the chain is Cytoplasmic. The chain crosses the membrane as a helical span at residues Val-132–Leu-152. Topologically, residues Arg-153 to Pro-157 are periplasmic. A helical transmembrane segment spans residues Ser-158–Leu-178. At Arg-179–Val-209 the chain is on the cytoplasmic side. Residues Val-210–Ile-230 traverse the membrane as a helical segment. Residues Met-231 to Ser-242 are Periplasmic-facing. Residues Asn-243 to Leu-263 form a helical membrane-spanning segment. Over Asn-264–Thr-277 the chain is Cytoplasmic. Transmembrane regions (helical) follow at residues Leu-278–Phe-298 and Asn-299–Ser-319. Residues Gln-320–Ser-333 lie on the Cytoplasmic side of the membrane. The chain crosses the membrane as a helical span at residues Ser-334–Leu-354. The Periplasmic segment spans residues Glu-355 to Asn-360. Residues Ile-361 to Pro-381 traverse the membrane as a helical segment. At Lys-382 to Ala-396 the chain is on the cytoplasmic side.

Belongs to the major facilitator superfamily. DHA1 family. MdtL (TC 2.A.1.2.22) subfamily.

It localises to the cell inner membrane. This chain is Multidrug resistance protein MdtL, found in Shewanella sp. (strain ANA-3).